We begin with the raw amino-acid sequence, 267 residues long: Protein COFACTOR ASSEMBLY OF COMPLEX C SUBUNIT B CCB1, chloroplastic (267 aa).

The N-terminal 44 residues, M1–T44, are a transit peptide targeting the chloroplast. At A45–L84 the chain is on the lumenal side. Residues A85–I105 traverse the membrane as a helical segment. Residues K106–Q164 are Stromal-facing. Residues A165–I185 form a helical membrane-spanning segment. Position 186 (T186) is a topological domain, lumenal. Residues V187–Y207 traverse the membrane as a helical segment. At Y208 to S267 the chain is on the stromal side.

The protein localises to the plastid. It is found in the chloroplast thylakoid membrane. In terms of biological role, required for the biogenesis and accumulation of native cytochrome b6 in the thylakoid membrane. Controls the conversion of apocytochrome b6 to holocytochrome b6. Required for covalent binding of the c-type heme to cytochrome b6. The sequence is that of Protein COFACTOR ASSEMBLY OF COMPLEX C SUBUNIT B CCB1, chloroplastic from Arabidopsis thaliana (Mouse-ear cress).